The sequence spans 352 residues: S-adenosylmethionine:tRNA ribosyltransferase-isomerase (352 aa).

This sequence belongs to the QueA family. Monomer.

The protein resides in the cytoplasm. It carries out the reaction 7-aminomethyl-7-carbaguanosine(34) in tRNA + S-adenosyl-L-methionine = epoxyqueuosine(34) in tRNA + adenine + L-methionine + 2 H(+). The protein operates within tRNA modification; tRNA-queuosine biosynthesis. Its function is as follows. Transfers and isomerizes the ribose moiety from AdoMet to the 7-aminomethyl group of 7-deazaguanine (preQ1-tRNA) to give epoxyqueuosine (oQ-tRNA). This chain is S-adenosylmethionine:tRNA ribosyltransferase-isomerase, found in Solibacter usitatus (strain Ellin6076).